Reading from the N-terminus, the 266-residue chain is Imidazole glycerol phosphate synthase subunit HisF (266 aa).

Catalysis depends on residues D11 and D130.

It belongs to the HisA/HisF family. Heterodimer of HisH and HisF.

The protein resides in the cytoplasm. The catalysed reaction is 5-[(5-phospho-1-deoxy-D-ribulos-1-ylimino)methylamino]-1-(5-phospho-beta-D-ribosyl)imidazole-4-carboxamide + L-glutamine = D-erythro-1-(imidazol-4-yl)glycerol 3-phosphate + 5-amino-1-(5-phospho-beta-D-ribosyl)imidazole-4-carboxamide + L-glutamate + H(+). Its pathway is amino-acid biosynthesis; L-histidine biosynthesis; L-histidine from 5-phospho-alpha-D-ribose 1-diphosphate: step 5/9. Functionally, IGPS catalyzes the conversion of PRFAR and glutamine to IGP, AICAR and glutamate. The HisF subunit catalyzes the cyclization activity that produces IGP and AICAR from PRFAR using the ammonia provided by the HisH subunit. This Delftia acidovorans (strain DSM 14801 / SPH-1) protein is Imidazole glycerol phosphate synthase subunit HisF.